Here is a 92-residue protein sequence, read N- to C-terminus: Sec-independent protein translocase protein TatA (92 aa).

The helical transmembrane segment at 1–21 (MGIFDWKHWIVILVVVVLVFG) threads the bilayer. Positions 44–92 (NDDEKPADPVVNPVPPAQPVHPQATQPITERRTFDVQAEKVEEPTRKDS) are disordered. The span at 72–92 (TERRTFDVQAEKVEEPTRKDS) shows a compositional bias: basic and acidic residues.

Belongs to the TatA/E family. As to quaternary structure, the Tat system comprises two distinct complexes: a TatABC complex, containing multiple copies of TatA, TatB and TatC subunits, and a separate TatA complex, containing only TatA subunits. Substrates initially bind to the TatABC complex, which probably triggers association of the separate TatA complex to form the active translocon.

It is found in the cell inner membrane. Its function is as follows. Part of the twin-arginine translocation (Tat) system that transports large folded proteins containing a characteristic twin-arginine motif in their signal peptide across membranes. TatA could form the protein-conducting channel of the Tat system. This is Sec-independent protein translocase protein TatA from Pseudomonas fluorescens (strain SBW25).